We begin with the raw amino-acid sequence, 441 residues long: Zinc finger protein ZIC 3 (441 aa).

A C2H2-type 1; atypical zinc finger spans residues 222–257 (LSCKWLEESPMNRPQKTCDRTFSSMHELVTHMTMEH). A C2H2-type 2; atypical zinc finger spans residues 266-293 (HICYWEECPRGGKSFKAKYKLVNHIRVH). C2H2-type zinc fingers lie at residues 299–323 (FPCP…KRTH), 329–353 (FKCE…MHVH), and 359–381 (YICK…MKVH). The segment at 375 to 441 (RKHMKVHESQ…LPPNFNEWYV (67 aa)) is disordered. A compositionally biased stretch (low complexity) spans 383–399 (SQGSDSSPAASSGYESA). Residues 406–429 (SANSEEPSKNSSATHQTNNSSHNT) show a composition bias toward polar residues.

This sequence belongs to the GLI C2H2-type zinc-finger protein family.

It is found in the nucleus. Its subcellular location is the cytoplasm. Probably acts as a transcriptional activator. May bind to the minimal GLI-consensus sequence 5'-GGGTGGTC-3'. Can determine the ectodermal cell fate and promote the earliest step of neural and neural crest development. Involved in establishing left-right asymmetry in the embryo. This is Zinc finger protein ZIC 3 (zic3) from Xenopus tropicalis (Western clawed frog).